The chain runs to 315 residues: Porphobilinogen deaminase (315 aa).

Cysteine 234 carries the post-translational modification S-(dipyrrolylmethanemethyl)cysteine.

Belongs to the HMBS family. Monomer. The cofactor is dipyrromethane.

The enzyme catalyses 4 porphobilinogen + H2O = hydroxymethylbilane + 4 NH4(+). It participates in porphyrin-containing compound metabolism; protoporphyrin-IX biosynthesis; coproporphyrinogen-III from 5-aminolevulinate: step 2/4. In terms of biological role, tetrapolymerization of the monopyrrole PBG into the hydroxymethylbilane pre-uroporphyrinogen in several discrete steps. The chain is Porphobilinogen deaminase (hemC) from Mycobacterium leprae (strain TN).